We begin with the raw amino-acid sequence, 301 residues long: Averufin oxidase A (301 aa).

A signal peptide spans methionine 1–alanine 23. 3 N-linked (GlcNAc...) asparagine glycosylation sites follow: asparagine 62, asparagine 86, and asparagine 190.

It belongs to the avfA family.

Its pathway is mycotoxin biosynthesis. Functionally, averufin oxidase A; part of the fragmented gene cluster that mediates the biosynthesis of dothistromin (DOTH), a polyketide toxin very similar in structure to the aflatoxin precursor, versicolorin B. The first step of the pathway is the conversion of acetate to norsolorinic acid (NOR) and requires the fatty acid synthase subunits hexA and hexB, as well as the polyketide synthase pksA. PksA combines a hexanoyl starter unit and 7 malonyl-CoA extender units to synthesize the precursor NOR. The hexanoyl starter unit is provided to the acyl-carrier protein (ACP) domain by the fungal fatty acid synthase hexA/hexB. The second step is the conversion of NOR to averantin (AVN) and requires the norsolorinic acid ketoreductase nor1, which catalyzes the dehydration of norsolorinic acid to form (1'S)-averantin. The cytochrome P450 monooxygenase avnA then catalyzes the hydroxylation of AVN to 5'hydroxyaverantin (HAVN). The next step is performed by adhA that transforms HAVN to averufin (AVF). Averufin might then be converted to hydroxyversicolorone by cypX and avfA. Hydroxyversicolorone is further converted versiconal hemiacetal acetate (VHA) by moxY. VHA is then the substrate for the versiconal hemiacetal acetate esterase est1 to yield versiconal (VAL). Versicolorin B synthase vbsA then converts VAL to versicolorin B (VERB) by closing the bisfuran ring. Then, the activity of the versicolorin B desaturase verB leads to versicolorin A (VERA). DotB, a predicted chloroperoxidase, may perform epoxidation of the A-ring of VERA. Alternatively, a cytochrome P450, such as cypX or avnA could catalyze this step. It is also possible that another, uncharacterized, cytochrome P450 enzyme is responsible for this step. Opening of the epoxide could potentially be achieved by the epoxide hydrolase epoA. However, epoA seems not to be required for DOTH biosynthesis, but other epoxide hydrolases may have the ability to complement this hydrolysis. Alternatively, opening of the epoxide ring could be achieved non-enzymatically. The next step is the deoxygenation of ring A to yield the 5,8-dihydroxyanthraquinone which is most likely catalyzed by the NADPH dehydrogenase encoded by ver1. The last stages of DOTH biosynthesis are proposed to involve hydroxylation of the bisfuran. OrdB and norB might have oxidative roles here. An alternative possibility is that cytochrome P450 monoogenases such as avnA and cypX might perform these steps in addition to previously proposed steps. This Dothistroma septosporum (Red band needle blight fungus) protein is Averufin oxidase A.